The sequence spans 165 residues: Chorismate pyruvate-lyase (165 aa).

4 residues coordinate substrate: M35, R77, L115, and E156.

This sequence belongs to the UbiC family. Monomer.

Its subcellular location is the cytoplasm. It carries out the reaction chorismate = 4-hydroxybenzoate + pyruvate. It functions in the pathway cofactor biosynthesis; ubiquinone biosynthesis. Its function is as follows. Removes the pyruvyl group from chorismate, with concomitant aromatization of the ring, to provide 4-hydroxybenzoate (4HB) for the ubiquinone pathway. The sequence is that of Chorismate pyruvate-lyase from Salmonella agona (strain SL483).